Here is a 262-residue protein sequence, read N- to C-terminus: Small ribosomal subunit protein mS23 (262 aa).

The segment at 211-262 (SGQSDEAPEGEGSDMSAGEYDMAVEELAGQGSIPNTPQSTVVPEGTSAPAHA) is disordered. Polar residues predominate over residues 242 to 251 (SIPNTPQSTV).

The protein belongs to the mitochondrion-specific ribosomal protein mS23 family. As to quaternary structure, component of the mitochondrial small ribosomal subunit.

The protein localises to the mitochondrion. This is Small ribosomal subunit protein mS23 (RSM25) from Phaeosphaeria nodorum (strain SN15 / ATCC MYA-4574 / FGSC 10173) (Glume blotch fungus).